Consider the following 446-residue polypeptide: Lysine histidine transporter 1 (446 aa).

Residues 1 to 37 (MVAQAPHDDHQDDEKLAAARQKEIEDWLPITSSRNAK) are Cytoplasmic-facing. Residues 38-58 (WWYSAFHNVTAMVGAGVLGLP) traverse the membrane as a helical segment. At 59–63 (YAMSQ) the chain is on the extracellular side. The chain crosses the membrane as a helical span at residues 64-84 (LGWGPGIAVLVLSWVITLYTL). At 85–115 (WQMVEMHEMVPGKRFDRYHELGQHAFGEKLG) the chain is on the cytoplasmic side. The chain crosses the membrane as a helical span at residues 116–136 (LYIVVPQQLIVEIGVCIVYMV). Residues 137–157 (TGGKSLKKFHELVCDDCKPIK) lie on the Extracellular side of the membrane. A helical membrane pass occupies residues 158-178 (LTYFIMIFASVHFVLSHLPNF). Topologically, residues 179 to 180 (NS) are cytoplasmic. The chain crosses the membrane as a helical span at residues 181–201 (ISGVSLAAAVMSLSYSTIAWA). Over 202–227 (SSASKGVQEDVQYGYKAKTTAGTVFN) the chain is Extracellular. A helical transmembrane segment spans residues 228 to 248 (FFSGLGDVAFAYAGHNVVLEI). At 249–268 (QATIPSTPEKPSKGPMWRGV) the chain is on the cytoplasmic side. The chain crosses the membrane as a helical span at residues 269 to 289 (IVAYIVVALCYFPVALVGYYI). At 290 to 305 (FGNGVEDNILMSLKKP) the chain is on the extracellular side. Residues 306–326 (AWLIATANIFVVIHVIGSYQI) traverse the membrane as a helical segment. Residues 327-352 (YAMPVFDMMETLLVKKLNFRPTTTLR) are Cytoplasmic-facing. Residues 353–375 (FFVRNFYVAATMFVGMTFPFFGG) traverse the membrane as a helical segment. Residues 376 to 378 (LLA) lie on the Extracellular side of the membrane. A helical membrane pass occupies residues 379-401 (FFGGFAFAPTTYFLPCVIWLAIY). The Cytoplasmic portion of the chain corresponds to 402–409 (KPKKYSLS). Residues 410-430 (WWANWVCIVFGLFLMVLSPIG) traverse the membrane as a helical segment. Over 431-446 (GLRTIVIQAKGYKFYS) the chain is Extracellular.

It belongs to the amino acid/polyamine transporter 2 family. Amino acid/auxin permease (AAAP) (TC 2.A.18.2) subfamily. In terms of tissue distribution, expressed in roots, stems, flowers, leaves, siliques and pollen. Found in the tips of roots and in the rhizodermis of emerging roots and in lateral roots. Higher expression in older leaves as compared to joung leaves. Detected first at the hydathodes, then in the epidermis and finally in matures leaves in all mesophyll cells. Not detected in vascular bundles or in seeds.

The protein localises to the cell membrane. With respect to regulation, inhibited by carbonlycyanide m-chlorophenylhydrazone (CCCP) and DEPC. Amino acid-proton symporter. Transporter with a broad specificity for histidine, lysine, glutamic acid, alanine, serine, proline and glycine. Involved in both apoplastic transport of amino acids in leaves and their uptake by roots. The chain is Lysine histidine transporter 1 (LHT1) from Arabidopsis thaliana (Mouse-ear cress).